The chain runs to 520 residues: MAPKKSVSKAGKELEVKKKGGKKEPVVAVEPPLAKEMKEFYHIQIRDLEDRLARYQRKWDELAVQEKMFRQEFEQLANNKKEIVAFLKRTLNQQVDEITDLNEQLQNLQLAKEMEKDAFEAQLAQVRHEFQETKDQLTTENIILGGKLAALEEFRLQKEEVTDKFTLLEEQVRKQENEFRDYAYNLEKKSVLDKDRLRKEIIQRVNLVANEFHKVTTNRMWETTKRAIKENNGITLQMARVSQQGMKLLQENEQLKGRQNNLCKQLELLENTQKVMARHKRGHQKIILMLTKKCQEQQQDTKEAEELRLLLSQLEQRSLQLQVDNQALKSQRDQLSLQLEQQQVDLQRLQQELANEQKVRASLEAALVQATSFLQNILQMHRDEEDSDVDVTFQPWHKEMLQQLLVMLSSTVATRPQKAACPHQESQSHGPPKESRPSIQLPRTGSLLPQLSDITPYQPGDLGLVPRQVHIPPNPQDLRLLSYITRVGTFRAHSSPEMRAPGSLKRLEKFSLPEVPLRPK.

Residues 1–22 form a disordered region; it reads MAPKKSVSKAGKELEVKKKGGK. Positions 10–22 are enriched in basic and acidic residues; the sequence is AGKELEVKKKGGK. Coiled-coil stretches lie at residues 33-189 and 236-372; these read LAKE…LEKK and LQMA…QATS. A disordered region spans residues 416-453; sequence PQKAACPHQESQSHGPPKESRPSIQLPRTGSLLPQLSD. Polar residues predominate over residues 437 to 453; it reads PSIQLPRTGSLLPQLSD.

It belongs to the CFAP157 family. Interacts with TUBB and TUBA4A. Interacts with CEP350.

The protein resides in the cytoplasm. Its subcellular location is the cytoskeleton. It is found in the cilium basal body. Specifically required during spermatogenesis for flagellum morphogenesis and sperm motility. May be required to suppress the formation of supernumerary axonemes and ensure a correct ultrastructure. This chain is Cilia- and flagella-associated protein 157, found in Homo sapiens (Human).